Reading from the N-terminus, the 569-residue chain is Tetratricopeptide repeat protein 22 (569 aa).

7 TPR repeats span residues 66–99 (PAVR…HPGN), 101–133 (NAWA…MGLA), 203–237 (ATLY…LRQV), 260–294 (KDTF…AKNQ), 295–328 (PPIL…LRDP), 383–418 (FKAY…ALVF), and 432–465 (PELQ…DDAG).

In Homo sapiens (Human), this protein is Tetratricopeptide repeat protein 22 (TTC22).